A 452-amino-acid chain; its full sequence is Phosphoglucosamine mutase (452 aa).

Catalysis depends on serine 101, which acts as the Phosphoserine intermediate. Mg(2+) is bound by residues serine 101, aspartate 241, aspartate 243, and aspartate 245. Serine 101 carries the phosphoserine modification.

It belongs to the phosphohexose mutase family. The cofactor is Mg(2+). In terms of processing, activated by phosphorylation.

The catalysed reaction is alpha-D-glucosamine 1-phosphate = D-glucosamine 6-phosphate. In terms of biological role, catalyzes the conversion of glucosamine-6-phosphate to glucosamine-1-phosphate. The sequence is that of Phosphoglucosamine mutase from Lactococcus lactis subsp. cremoris (strain SK11).